We begin with the raw amino-acid sequence, 510 residues long: ATP synthase subunit alpha (510 aa).

169–176 (GDRQTGKT) lines the ATP pocket.

Belongs to the ATPase alpha/beta chains family. As to quaternary structure, F-type ATPases have 2 components, CF(1) - the catalytic core - and CF(0) - the membrane proton channel. CF(1) has five subunits: alpha(3), beta(3), gamma(1), delta(1), epsilon(1). CF(0) has four main subunits: a(1), b(1), b'(1) and c(9-12).

Its subcellular location is the cell inner membrane. It carries out the reaction ATP + H2O + 4 H(+)(in) = ADP + phosphate + 5 H(+)(out). Produces ATP from ADP in the presence of a proton gradient across the membrane. The alpha chain is a regulatory subunit. In Rhodopseudomonas palustris (strain HaA2), this protein is ATP synthase subunit alpha.